The primary structure comprises 275 residues: Diaminopimelate epimerase (275 aa).

Substrate is bound by residues asparagine 12, glutamine 45, and asparagine 65. The active-site Proton donor is cysteine 74. Substrate-binding positions include 75–76 (GN), asparagine 158, asparagine 191, and 209–210 (ER). The active-site Proton acceptor is the cysteine 218. 219–220 (GT) is a binding site for substrate.

Belongs to the diaminopimelate epimerase family. In terms of assembly, homodimer.

The protein localises to the cytoplasm. It catalyses the reaction (2S,6S)-2,6-diaminopimelate = meso-2,6-diaminopimelate. The protein operates within amino-acid biosynthesis; L-lysine biosynthesis via DAP pathway; DL-2,6-diaminopimelate from LL-2,6-diaminopimelate: step 1/1. Functionally, catalyzes the stereoinversion of LL-2,6-diaminopimelate (L,L-DAP) to meso-diaminopimelate (meso-DAP), a precursor of L-lysine and an essential component of the bacterial peptidoglycan. The polypeptide is Diaminopimelate epimerase (Shewanella denitrificans (strain OS217 / ATCC BAA-1090 / DSM 15013)).